The primary structure comprises 686 residues: Chromatin modification-related protein EAF1 (686 aa).

Residues 71-97 (QMKRRQNDHHNQGPPPKVQKSTVDSLK) form a disordered region. Residues 202-280 (FKFIRKSKKK…DKSIIRNLPV (79 aa)) form the HSA domain. The Myb-like domain maps to 354–418 (IPTIWLPEDD…FERYIQLNDK (65 aa)). Disordered stretches follow at residues 493 to 517 (RKST…RIPT), 544 to 617 (ARMV…QQRR), and 657 to 686 (QQGY…PNNA). Residues 497 to 506 (AELQANQNVT) show a composition bias toward polar residues. The span at 554–568 (APAPAPAPPPPPPPK) shows a compositional bias: pro residues. Over residues 574–588 (TTPNGTPLTNEQIQH) the composition is skewed to polar residues. A compositionally biased stretch (low complexity) spans 599–613 (LQQQQQQQQQQQHQQ). Residues 671-686 (QKNQTASPMSGSPNNA) show a composition bias toward polar residues.

This sequence belongs to the EAF1 family. In terms of assembly, component of the NuA4 histone acetyltransferase complex.

The protein resides in the nucleus. Its function is as follows. Component of the NuA4 histone acetyltransferase complex which is involved in transcriptional activation of selected genes principally by acetylation of nucleosomal histone H4 and H2A. The NuA4 complex is also involved in DNA repair. This Candida albicans (strain SC5314 / ATCC MYA-2876) (Yeast) protein is Chromatin modification-related protein EAF1 (VID21).